The primary structure comprises 249 residues: Type I iodothyronine deiodinase (249 aa).

Over 1-12 (MGLPQPGLWLKR) the chain is Extracellular. The chain crosses the membrane as a helical; Signal-anchor for type III membrane protein span at residues 13-33 (LWVLLEVAVHVVVGKVLLILF). Residues 34–249 (PDRVKRNILA…VRAVLEKLHS (216 aa)) are Cytoplasmic-facing. Residue U126 is part of the active site. U126 is a non-standard amino acid (selenocysteine).

The protein belongs to the iodothyronine deiodinase family. As to quaternary structure, predominantly monomer. Can form homodimers but homodimerization is not essential for enzyme activity.

Its subcellular location is the cell membrane. The protein resides in the endoplasmic reticulum membrane. It is found in the basolateral cell membrane. The enzyme catalyses 3,3',5-triiodo-L-thyronine + iodide + A + H(+) = L-thyroxine + AH2. It carries out the reaction 3,3',5'-triiodo-L-thyronine + iodide + A + H(+) = L-thyroxine + AH2. It catalyses the reaction 3,3'-diiodo-L-thyronine + iodide + A + H(+) = 3,3',5'-triiodo-L-thyronine + AH2. The catalysed reaction is 3,3'-diiodo-L-thyronine + iodide + A + H(+) = 3,3',5-triiodo-L-thyronine + AH2. The enzyme catalyses 3'-iodo-L-thyronine + iodide + A + H(+) = 3',5'-diiodo-L-thyronine + AH2. It carries out the reaction 3-iodo-L-thyronine + iodide + A + H(+) = 3,5-diiodo-L-thyronine + AH2. It catalyses the reaction 3-iodo-L-thyronine + iodide + A + H(+) = 3,3'-diiodo-L-thyronine + AH2. The catalysed reaction is 3,3'-diiodothyronamine + iodide + A + H(+) = 3,3',5'-triiodothyronamine + AH2. The enzyme catalyses 3'-iodothyronamine + iodide + A + H(+) = 3',5'-diiodothyronamine + AH2. It carries out the reaction 3-iodothyronamine + iodide + A + H(+) = 3,3'-diiodothyronamine + AH2. It catalyses the reaction 3,3'-diiodothyronamine + iodide + A + H(+) = 3,3',5-triiodothyronamine + AH2. The catalysed reaction is 3-iodothyronamine + iodide + A + H(+) = 3,5-diiodothyronamine + AH2. The enzyme catalyses 3,3'-diiodo-L-thyronine sulfate + iodide + A + H(+) = 3,3',5'-triiodo-L-thyronine sulfate + AH2. It carries out the reaction 3,3',5'-triiodo-L-thyronine sulfate + iodide + A + H(+) = L-thyroxine sulfate + AH2. It catalyses the reaction 3,3'-diiodo-L-thyronine sulfate + iodide + A + H(+) = 3,3',5-triiodo-L-thyronine sulfate + AH2. Its activity is regulated as follows. Deiodination of substrates 3,3',5'-triiodothyronine, 3,3',5'-triiodothyronamine and 3',5'- diiodothyronamine are inhibited by 6n-propyl-2-thiouracil (PTU). In terms of biological role, plays a crucial role in the metabolism of thyroid hormones (TH) and has specific roles in TH activation and inactivation by deiodination. Catalyzes the deiodination of L-thyroxine (T4) to 3,5,3'-triiodothyronine (T3), 3,3',5'-triiodothyronine (rT3) to 3,3'-diiodothyronine (3,3'-T2) and 3',5'-diiodothyronine (3',5'-T2) to 3'-monoiodothyronine (3'-T1) via outer-ring deiodination (ORD). Catalyzes the deiodination of T4 to 3,3',5'-triiodothyronine (rT3) via inner-ring deiodination (IRD). Catalyzes the deiodination of T3 to 3,3'-T2, 3,5-diiodothyronine (3,5-T2) to 3- monoiodothyronine (3-T1) and 3,3'-T2 to 3-T1 via IRD. Catalyzes the phenolic ring deiodinations of 3,3',5'-triiodothyronamine and 3',5'-diiodothyronamine. Catalyzes the phenolic ring deiodination of 3,3'-diiodothyronamine and tyrosyl ring deiodinations of 3,5,3'-triiodothyronamine and 3,5-diiodothyronamine. Catalyzes the deiodination of L-thyroxine sulfate and 3,3',5-triiodo-L-thyronine sulfate via IRD and of 3,3',5'-triiodo-L-thyronine sulfate via ORD. The sequence is that of Type I iodothyronine deiodinase (DIO1) from Homo sapiens (Human).